Reading from the N-terminus, the 80-residue chain is U4-theraphotoxin-Spl1a (80 aa).

The first 21 residues, 1–21, serve as a signal peptide directing secretion; the sequence is MKASLFAVIFGLVVLCACSFA. The propeptide occupies 22-50; sequence EDQFASPNELLKSMFVESTHELTPEVEGR. Disulfide bonds link Cys52–Cys66, Cys59–Cys71, and Cys65–Cys75. Residue Leu79 is modified to Leucine amide.

The protein belongs to the neurotoxin 30 (phrixotoxin) family. As to expression, expressed by the venom gland.

It localises to the secreted. Its function is as follows. Probable ion channel inhibitor. Shows insecticidal activity when injected into mealworms. The polypeptide is U4-theraphotoxin-Spl1a (Selenotypus plumipes (Australian featherleg tarantula)).